The primary structure comprises 386 residues: Acetylornithine aminotransferase (386 aa).

Pyridoxal 5'-phosphate is bound by residues 96 to 97 and phenylalanine 123; that span reads GA. Residue arginine 126 participates in N(2)-acetyl-L-ornithine binding. 208–211 is a pyridoxal 5'-phosphate binding site; sequence DEVQ. Lysine 237 is subject to N6-(pyridoxal phosphate)lysine. Serine 265 is a binding site for N(2)-acetyl-L-ornithine. Threonine 266 serves as a coordination point for pyridoxal 5'-phosphate.

It belongs to the class-III pyridoxal-phosphate-dependent aminotransferase family. ArgD subfamily. As to quaternary structure, homodimer. Requires pyridoxal 5'-phosphate as cofactor.

It is found in the cytoplasm. The catalysed reaction is N(2)-acetyl-L-ornithine + 2-oxoglutarate = N-acetyl-L-glutamate 5-semialdehyde + L-glutamate. It functions in the pathway amino-acid biosynthesis; L-arginine biosynthesis; N(2)-acetyl-L-ornithine from L-glutamate: step 4/4. The chain is Acetylornithine aminotransferase from Bacillus anthracis.